Consider the following 68-residue polypeptide: Conotoxin ArMMSK-01 (68 aa).

The signal sequence occupies residues 1-20 (MMSKLGVLLTICMLLFPLTA). A propeptide spanning residues 21–51 (LPLDGDQPADRPAERMQDDFISEQHPLFNPI) is cleaved from the precursor. 3 cysteine pairs are disulfide-bonded: cysteine 54–cysteine 67, cysteine 55–cysteine 63, and cysteine 59–cysteine 66. 4-hydroxyproline is present on proline 65.

It belongs to the conotoxin M superfamily. Expressed by the venom duct.

The protein localises to the secreted. This chain is Conotoxin ArMMSK-01, found in Conus arenatus (Sand-dusted cone).